The chain runs to 232 residues: Ornithine carbamoyltransferase (232 aa).

Carbamoyl phosphate is bound by residues Gln-15, Arg-39, and 66–69; that span reads HPTQ. L-ornithine-binding positions include Asn-99, Asp-163, and 167–168; that span reads SM. Carbamoyl phosphate-binding positions include 204–207 and Thr-232; that span reads HCLP.

It belongs to the aspartate/ornithine carbamoyltransferase superfamily. OTCase family.

Its subcellular location is the cytoplasm. The enzyme catalyses carbamoyl phosphate + L-ornithine = L-citrulline + phosphate + H(+). It functions in the pathway amino-acid biosynthesis; L-arginine biosynthesis; L-arginine from L-ornithine and carbamoyl phosphate: step 1/3. The protein is Ornithine carbamoyltransferase (argF) of Neisseria animalis.